We begin with the raw amino-acid sequence, 277 residues long: Ribosomal RNA small subunit methyltransferase A (277 aa).

S-adenosyl-L-methionine-binding residues include N26, L28, G53, E74, D101, and N123.

The protein belongs to the class I-like SAM-binding methyltransferase superfamily. rRNA adenine N(6)-methyltransferase family. RsmA subfamily.

The protein resides in the cytoplasm. The catalysed reaction is adenosine(1518)/adenosine(1519) in 16S rRNA + 4 S-adenosyl-L-methionine = N(6)-dimethyladenosine(1518)/N(6)-dimethyladenosine(1519) in 16S rRNA + 4 S-adenosyl-L-homocysteine + 4 H(+). In terms of biological role, specifically dimethylates two adjacent adenosines (A1518 and A1519) in the loop of a conserved hairpin near the 3'-end of 16S rRNA in the 30S particle. May play a critical role in biogenesis of 30S subunits. The sequence is that of Ribosomal RNA small subunit methyltransferase A from Opitutus terrae (strain DSM 11246 / JCM 15787 / PB90-1).